Consider the following 49-residue polypeptide: Large ribosomal subunit protein bL33 (49 aa).

Belongs to the bacterial ribosomal protein bL33 family.

This chain is Large ribosomal subunit protein bL33, found in Carboxydothermus hydrogenoformans (strain ATCC BAA-161 / DSM 6008 / Z-2901).